Here is a 290-residue protein sequence, read N- to C-terminus: ATP synthase gamma chain (290 aa).

It belongs to the ATPase gamma chain family. In terms of assembly, F-type ATPases have 2 components, CF(1) - the catalytic core - and CF(0) - the membrane proton channel. CF(1) has five subunits: alpha(3), beta(3), gamma(1), delta(1), epsilon(1). CF(0) has three main subunits: a, b and c.

It is found in the cell inner membrane. Produces ATP from ADP in the presence of a proton gradient across the membrane. The gamma chain is believed to be important in regulating ATPase activity and the flow of protons through the CF(0) complex. The sequence is that of ATP synthase gamma chain from Buchnera aphidicola subsp. Acyrthosiphon pisum (strain APS) (Acyrthosiphon pisum symbiotic bacterium).